Reading from the N-terminus, the 227-residue chain is Prolactin (227 aa).

A signal peptide spans 1–28; sequence MNIKGSPWKGSLLLLLVSNLLLCQSVAP. A disulfide bond links Cys32 and Cys39. Residue Ser54 is modified to Phosphoserine. N-linked (GlcNAc...) asparagine; partial glycosylation occurs at Asn59. 4 positions are modified to phosphoserine: Ser62, Ser118, Ser163, and Ser194. Intrachain disulfides connect Cys86–Cys202 and Cys219–Cys227.

Belongs to the somatotropin/prolactin family. In terms of assembly, interacts with PRLR.

It is found in the secreted. Prolactin acts primarily on the mammary gland by promoting lactation. The sequence is that of Prolactin (PRL) from Homo sapiens (Human).